Here is a 607-residue protein sequence, read N- to C-terminus: Glutamine--fructose-6-phosphate aminotransferase [isomerizing] (607 aa).

Residue cysteine 2 is the Nucleophile; for GATase activity of the active site. The region spanning cysteine 2–glutamate 217 is the Glutamine amidotransferase type-2 domain. SIS domains lie at threonine 277–phenylalanine 422 and isoleucine 455–proline 597. Lysine 602 functions as the For Fru-6P isomerization activity in the catalytic mechanism.

In terms of assembly, homodimer.

The protein localises to the cytoplasm. The enzyme catalyses D-fructose 6-phosphate + L-glutamine = D-glucosamine 6-phosphate + L-glutamate. Catalyzes the first step in hexosamine metabolism, converting fructose-6P into glucosamine-6P using glutamine as a nitrogen source. This is Glutamine--fructose-6-phosphate aminotransferase [isomerizing] from Bartonella henselae (strain ATCC 49882 / DSM 28221 / CCUG 30454 / Houston 1) (Rochalimaea henselae).